The following is a 184-amino-acid chain: Glutathione-regulated potassium-efflux system ancillary protein KefG (184 aa).

The protein belongs to the NAD(P)H dehydrogenase (quinone) family. KefG subfamily. As to quaternary structure, interacts with KefB.

It is found in the cell inner membrane. The enzyme catalyses a quinone + NADH + H(+) = a quinol + NAD(+). It catalyses the reaction a quinone + NADPH + H(+) = a quinol + NADP(+). Its function is as follows. Regulatory subunit of a potassium efflux system that confers protection against electrophiles. Required for full activity of KefB. The chain is Glutathione-regulated potassium-efflux system ancillary protein KefG from Erwinia tasmaniensis (strain DSM 17950 / CFBP 7177 / CIP 109463 / NCPPB 4357 / Et1/99).